The primary structure comprises 110 residues: AYDMTQTPSSVSAAVGGTVTINCQASEDISANLAWYQQKPGQPPKLLIYAASDLASGVPSRFKGSGSGTEYTLTISGVQCADAATYYCQSADYSGSAVTFGGGTEVVVKG.

The segment at 1–23 (AYDMTQTPSSVSAAVGGTVTINC) is framework-1. A complementarity-determining-1 region spans residues 24-34 (QASEDISANLA). Residues 35 to 49 (WYQQKPGQPPKLLIY) form a framework-2 region. The segment at 50 to 56 (AASDLAS) is complementarity-determining-2. Residues 57 to 88 (GVPSRFKGSGSGTEYTLTISGVQCADAATYYC) form a framework-3 region. The tract at residues 89-99 (QSADYSGSAVT) is complementarity-determining-3. The framework-4 stretch occupies residues 100-109 (FGGGTEVVVK).

This chain is Ig kappa chain V region 3547, found in Oryctolagus cuniculus (Rabbit).